The following is a 240-amino-acid chain: Sugar fermentation stimulation protein homolog (240 aa).

Belongs to the SfsA family.

The chain is Sugar fermentation stimulation protein homolog from Saccharolobus islandicus (strain M.14.25 / Kamchatka #1) (Sulfolobus islandicus).